A 38-amino-acid chain; its full sequence is MTQPNPNKQIVELNRTSLFWGLLLIFVLAILFSNYFFN.

A helical transmembrane segment spans residues 17-37 (SLFWGLLLIFVLAILFSNYFF).

The protein belongs to the PsbL family. As to quaternary structure, PSII is composed of 1 copy each of membrane proteins PsbA, PsbB, PsbC, PsbD, PsbE, PsbF, PsbH, PsbI, PsbJ, PsbK, PsbL, PsbM, PsbT, PsbX, PsbY, PsbZ, Psb30/Ycf12, at least 3 peripheral proteins of the oxygen-evolving complex and a large number of cofactors. It forms dimeric complexes.

It localises to the plastid. The protein resides in the chloroplast thylakoid membrane. In terms of biological role, one of the components of the core complex of photosystem II (PSII). PSII is a light-driven water:plastoquinone oxidoreductase that uses light energy to abstract electrons from H(2)O, generating O(2) and a proton gradient subsequently used for ATP formation. It consists of a core antenna complex that captures photons, and an electron transfer chain that converts photonic excitation into a charge separation. This subunit is found at the monomer-monomer interface and is required for correct PSII assembly and/or dimerization. In Chara vulgaris (Common stonewort), this protein is Photosystem II reaction center protein L.